A 458-amino-acid chain; its full sequence is A-type ATP synthase subunit B (458 aa).

This sequence belongs to the ATPase alpha/beta chains family. In terms of assembly, has multiple subunits with at least A(3), B(3), C, D, E, F, H, I and proteolipid K(x).

It is found in the cell membrane. In terms of biological role, component of the A-type ATP synthase that produces ATP from ADP in the presence of a proton gradient across the membrane. The B chain is a regulatory subunit. The chain is A-type ATP synthase subunit B from Methanocella arvoryzae (strain DSM 22066 / NBRC 105507 / MRE50).